Consider the following 357-residue polypeptide: UDP-N-acetylglucosamine--N-acetylmuramyl-(pentapeptide) pyrophosphoryl-undecaprenol N-acetylglucosamine transferase (357 aa).

UDP-N-acetyl-alpha-D-glucosamine is bound by residues 12–14, asparagine 124, arginine 163, serine 189, isoleucine 243, 262–267, and glutamine 288; these read TGG and ALTVSE.

It belongs to the glycosyltransferase 28 family. MurG subfamily.

It localises to the cell inner membrane. The enzyme catalyses di-trans,octa-cis-undecaprenyl diphospho-N-acetyl-alpha-D-muramoyl-L-alanyl-D-glutamyl-meso-2,6-diaminopimeloyl-D-alanyl-D-alanine + UDP-N-acetyl-alpha-D-glucosamine = di-trans,octa-cis-undecaprenyl diphospho-[N-acetyl-alpha-D-glucosaminyl-(1-&gt;4)]-N-acetyl-alpha-D-muramoyl-L-alanyl-D-glutamyl-meso-2,6-diaminopimeloyl-D-alanyl-D-alanine + UDP + H(+). It functions in the pathway cell wall biogenesis; peptidoglycan biosynthesis. In terms of biological role, cell wall formation. Catalyzes the transfer of a GlcNAc subunit on undecaprenyl-pyrophosphoryl-MurNAc-pentapeptide (lipid intermediate I) to form undecaprenyl-pyrophosphoryl-MurNAc-(pentapeptide)GlcNAc (lipid intermediate II). This Pseudomonas aeruginosa (strain LESB58) protein is UDP-N-acetylglucosamine--N-acetylmuramyl-(pentapeptide) pyrophosphoryl-undecaprenol N-acetylglucosamine transferase.